The sequence spans 306 residues: Dermonecrotic toxin LiSicTox-alphaIA1a (306 aa).

The first 18 residues, 1 to 18, serve as a signal peptide directing secretion; sequence MLPYIVLVLGCWSVLSQA. Residues 19–26 constitute a propeptide that is removed on maturation; the sequence is AQTDDEER. H38 is a catalytic residue. Mg(2+) is bound by residues E58 and D60. Catalysis depends on H74, which acts as the Nucleophile. Intrachain disulfides connect C78/C84 and C80/C223. Residue D118 participates in Mg(2+) binding.

The protein belongs to the arthropod phospholipase D family. Class II subfamily. Class IIa sub-subfamily. The cofactor is Mg(2+). Expressed by the venom gland.

The protein resides in the secreted. The enzyme catalyses an N-(acyl)-sphingosylphosphocholine = an N-(acyl)-sphingosyl-1,3-cyclic phosphate + choline. It catalyses the reaction an N-(acyl)-sphingosylphosphoethanolamine = an N-(acyl)-sphingosyl-1,3-cyclic phosphate + ethanolamine. The catalysed reaction is a 1-acyl-sn-glycero-3-phosphocholine = a 1-acyl-sn-glycero-2,3-cyclic phosphate + choline. It carries out the reaction a 1-acyl-sn-glycero-3-phosphoethanolamine = a 1-acyl-sn-glycero-2,3-cyclic phosphate + ethanolamine. The enzyme catalyses 1-hexadecanoyl-sn-glycero-3-phosphocholine = 1-hexadecanoyl-sn-glycero-2,3-cyclic phosphate + choline. Catalytic activity and hemolysis are inhibited by divalent ion chelators (1,10-phenanthroline, EDTA, and EGTA). Functionally, dermonecrotic toxins cleave the phosphodiester linkage between the phosphate and headgroup of certain phospholipids (sphingolipid and lysolipid substrates), forming an alcohol (often choline) and a cyclic phosphate. This toxin acts on sphingomyelin (SM) with high activity. It discriminate between the number of carbon atoms in the substrates, since it prefers SM with six carbons in the fatty acid chain (SM6:0) to other SMs (SM12:0 &gt; SM16:0 &gt; SM18:0 &gt; SM2:0 &gt; SM24:0). It also acts on lysophosphatidylcholine (LPC) (LPC16:0 = LPC12:0 &gt; LPC18:0), and lyso-platelet activating factor (LPAF, an alkyl-LPC) but not on phosphatidylcholine (PC). It may also act on ceramide phosphoethanolamine (CPE), lysophosphatidylcholine (LPC) and lysophosphatidylethanolamine (LPE), but not on lysophosphatidylserine (LPS), and lysophosphatidylglycerol (LPG). It acts by transphosphatidylation, releasing exclusively cyclic phosphate products as second products. In vivo, it induces dermonecrosis, vascular permeability, platelet aggregation, inflammatory response, edema and cytotoxicity against renal epithelial cells. It causes direct nephrotoxicity and is directly toxic to liver. It also induces hemolysis in a complement-dependent manner as well as in a complement-independent manner. The hemolysis provoked in a complement-independent manner is composed of several steps. The toxin binds to erythrocyte membranes, hydrolyzes membrane phospholipids (SM and LPC) thus generating metabolism products that cause hemolysis, probably by provoking an increase of calcium inside cells. The calcium influx is due to the opening of L-type calcium channels, since L-type calcium channel blockers inhibit calcium influx. Is lethal to mice when intraperitoneally injected. This is Dermonecrotic toxin LiSicTox-alphaIA1a from Loxosceles intermedia (Brown spider).